The following is a 154-amino-acid chain: CS6 fimbrial subunit A (154 aa).

The first 18 residues, methionine 1–alanine 18, serve as a signal peptide directing secretion.

Its subcellular location is the fimbrium. Its function is as follows. Fimbriae (also called pili), polar filaments radiating from the surface of the bacterium to a length of 0.5-1.5 micrometers and numbering 100-300 per cell, enable bacteria to colonize the epithelium of specific host organs. In Escherichia coli, this protein is CS6 fimbrial subunit A (cssA).